We begin with the raw amino-acid sequence, 1200 residues long: Zinc finger protein 804A (1200 aa).

The segment at Phe57–His81 adopts a C2H2-type zinc-finger fold. 6 disordered regions span residues Ser252–Met280, Asp343–Ala367, His582–Gly687, Glu727–Ser777, Gln799–Met828, and Pro874–Glu949. The segment covering His585–Lys603 has biased composition (basic residues). Residues Ser604–Thr666 are compositionally biased toward basic and acidic residues. Polar residues-rich tracts occupy residues Met667–Gly687 and Leu732–Asn756. Over residues Pro800–Leu811 the composition is skewed to basic residues. A compositionally biased stretch (polar residues) spans Thr891–Lys944.

This is Zinc finger protein 804A (Znf804a) from Mus musculus (Mouse).